The chain runs to 242 residues: Probable transcriptional regulatory protein Bamb_2332 (242 aa).

Belongs to the TACO1 family.

Its subcellular location is the cytoplasm. The protein is Probable transcriptional regulatory protein Bamb_2332 of Burkholderia ambifaria (strain ATCC BAA-244 / DSM 16087 / CCUG 44356 / LMG 19182 / AMMD) (Burkholderia cepacia (strain AMMD)).